The primary structure comprises 516 residues: Serine carboxypeptidase II-3 (516 aa).

The first 20 residues, 1–20, serve as a signal peptide directing secretion; sequence MKCTVVALVLLVAVQCLVLG. Residues 21–77 constitute a propeptide that is removed on maturation; it reads AGPAAAAKARRTRQGDYLNRLRGSPSSRASWESLAAVEEQTTTKAAGRPAPVAAAVE. 3 disulfides stabilise this stretch: Cys-143–Cys-391, Cys-300–Cys-315, and Cys-339–Cys-359. Residues Asn-194 and Asn-205 are each glycosylated (N-linked (GlcNAc...) asparagine). Residue Ser-236 is part of the active site. A glycan (N-linked (GlcNAc...) asparagine) is linked at Asn-301. Positions 342 to 352 are cleaved as a propeptide — linker peptide; the sequence is EKLVTPPIAPS. Asn-380 carries an N-linked (GlcNAc...) asparagine glycan. Residues Asp-427 and His-484 contribute to the active site.

Belongs to the peptidase S10 family. In terms of assembly, carboxypeptidase II is a dimer, where each monomer is composed of two chains linked by a disulfide bond. In terms of processing, the linker peptide is endoproteolytically excised during enzyme maturation.

It catalyses the reaction Preferential release of a C-terminal arginine or lysine residue.. The protein is Serine carboxypeptidase II-3 (CXP;2-3) of Hordeum vulgare (Barley).